The primary structure comprises 308 residues: GTP cyclohydrolase FolE2 (308 aa).

Belongs to the GTP cyclohydrolase IV family.

It catalyses the reaction GTP + H2O = 7,8-dihydroneopterin 3'-triphosphate + formate + H(+). The protein operates within cofactor biosynthesis; 7,8-dihydroneopterin triphosphate biosynthesis; 7,8-dihydroneopterin triphosphate from GTP: step 1/1. Its function is as follows. Converts GTP to 7,8-dihydroneopterin triphosphate. The protein is GTP cyclohydrolase FolE2 of Colwellia psychrerythraea (strain 34H / ATCC BAA-681) (Vibrio psychroerythus).